We begin with the raw amino-acid sequence, 156 residues long: Transcription inhibitor protein Gfh1 (156 aa).

Residues 1–74 (MAREVKLTKA…LEDILSRAVI (74 aa)) are a coiled coil. Residues E20 and E24 each contribute to the Zn(2+) site.

Belongs to the GreA/GreB family. In terms of assembly, interacts with RNAP.

In terms of biological role, inhibits all catalytic activities of RNA polymerase (RNAP) by partially occluding its substrate-binding site and preventing NTP binding. This is Transcription inhibitor protein Gfh1 (gfh1) from Thermus thermophilus (strain ATCC 27634 / DSM 579 / HB8).